A 1475-amino-acid chain; its full sequence is MSGSNAKSSGTGFGSHIPSIEEKNKQIQQETMMEKLRAKYRNKPKSYEEIKKSVRMYFIEKHYPLDPLCKATLQSALDKLQHYIKVTSRHGLVERLESLSRQLGLKFMEDQQLLFISTDMFYVEILLDAAGSLSDVKVHHECKIEQQSSELVACLKSGDFADFTVQLEGLSSIYQLNAEPKVKKKAFVALQAMETDIQSLYQLHLQGHSGDSYSLMTSSSVGLVLPRRGGHPMRLTYFCPPLHLPEGDPKLASGDFTIDQVMRSSYGLSATINLEGSSANKLQTLPTVTLVRDAQTGLEVPTYAQLNQNNSLLMPATFVLRLNKPMPVCLESLKALGLPGLDSVATPPGPPTTVLNLIVQTASKQAIKNTQRGLYVNLPKETHCYFFTDNRKLQGTLVSSLPFTEPAQVPRIVAFLKKQALFYTLLASCVREQQKQYNDMDSTVILEVTAVSFNQITVELQHPYEESLATVDFLLEDGQPTCSVYCLTNEYELLSQKLTRTARKVVSIPMVIYKLLKCWDEEHEFKLHGAIGPGSGSGAIGGGGMSGGGPVSGVGNNFSQFSMDTPTPSDGSLPGGGFANINNLKMDAKSRSLADAFAASTSAAAAIAGLINLKRETDPQSGSSASGTTVSGSSSSSGSAKTSDHDIADKYKNIWKDKTPNLKHCVSITPIPGDGKSGSAGGVSGVEVQRTGGIEIIPLNAQAAIAGGGVTASSSATPTTITITPITGKDPSKDSTKKSTAASAGVGVAAKRPHESSTSSSSTSGCSGSGSSMSSSASSGSSDTQKEKKRKKKRDDSPMGPPEKIYSRQNSPAGGADASATGGVVRKFSSPSSSPKAGGGGQGLMAGVPTARPSPKHSPVYSSPKHNTASNSPKSPFGTHSPKHGSSGKPSMSTLKSAATAATILSPKGDKSSSAVGNTSSGPSASSGSSGATGLVRSFASVGAPPPPPPIPPLASSSGSISSSQSLKKEKTSSASGSSSTSSSATAGVASGGGISPASVAAAVAALKSSQQQMKSVASLSHLAAGGGLGSYAAPSGAGASGAAAVVVGAGAGAGAGASGLELSALRKGMAGGAVSLMTSTAALAPTIPAPTTTVAAGSAASLVSPVSAVVGQGQETAGAAAAATLATATILQQQPQPGAAPTSSCLTTSGGSSDSAGSINPAGASTEYMVKPSSQEGLKLTINKTGSSKSSGTGSGSSSSSGLQAKAKSSSSGATSFAGSTGSTKKQHTGLKPGVNSGPASKKATAAVSSATASSSKHFFQKANSSGNLSSKLSGSGSGGGIPLTKSNSTNSFQEHNAPRRRPSMGALASGSSGGGSGQRKLGSASGGGSGSSGSVSPALSGSMSQPPPRFDHHTDMMTILQYASPTMAASMEGFIKGLHNKFQIPKLSQRGSGGNTTSGRSTPSGSSEPALAGTSSSILGPIASSTGLTEPEAKPPVPPSQSGNEGLLNLSSTAGTPSADGIDEELLASLAGE.

The span at 1-10 (MSGSNAKSSG) shows a compositional bias: polar residues. 7 disordered regions span residues 1-26 (MSGS…KNKQ), 616-644 (ETDP…KTSD), 709-992 (GVTA…VASG), 1135-1166 (QPQP…AGAS), 1184-1245 (NKTG…SKKA), 1263-1354 (KANS…RFDH), and 1387-1475 (PKLS…LAGE). 3 stretches are compositionally biased toward low complexity: residues 621 to 641 (SGSS…GSAK), 711 to 729 (TASS…ITGK), and 738 to 782 (KSTA…SGSS). 4 positions are modified to phosphoserine: serine 830, serine 834, serine 854, and serine 858. Polar residues-rich tracts occupy residues 860-874 (VYSS…NSPK) and 888-897 (GKPSMSTLKS). The span at 919–934 (TSSGPSASSGSSGATG) shows a compositional bias: low complexity. The span at 944-953 (APPPPPPIPP) shows a compositional bias: pro residues. Low complexity-rich tracts occupy residues 954–966 (LASS…SSQS), 973–989 (SSAS…TAGV), 1143–1159 (TSSC…SAGS), 1185–1225 (KTGS…TGST), and 1265–1276 (NSSGNLSSKLSG). A compositionally biased stretch (polar residues) spans 1286 to 1296 (TKSNSTNSFQE). 2 stretches are compositionally biased toward low complexity: residues 1334-1346 (SGSV…GSMS) and 1399-1409 (TSGRSTPSGSS). Polar residues-rich tracts occupy residues 1415-1430 (GTSS…STGL) and 1442-1458 (SQSG…TAGT).

This sequence belongs to the Mediator complex subunit 1 family. Component of the Mediator complex.

It is found in the nucleus. Its function is as follows. Component of the Mediator complex, a coactivator involved in the regulated transcription of nearly all RNA polymerase II-dependent genes. Mediator functions as a bridge to convey information from gene-specific regulatory proteins to the basal RNA polymerase II transcription machinery. Mediator is recruited to promoters by direct interactions with regulatory proteins and serves as a scaffold for the assembly of a functional preinitiation complex with RNA polymerase II and the general transcription factors. Required for activated transcription of the MtnA, MtnB and MtnD genes. This chain is Mediator of RNA polymerase II transcription subunit 1 (MED1), found in Drosophila melanogaster (Fruit fly).